The sequence spans 314 residues: N-myc-interactor (314 aa).

The interval 1-24 (MDADKDNIKQACDERSAEMDDMRG) is disordered. At S16 the chain carries Phosphoserine. Residues 31 to 65 (VHEIMSENKELDEEIKKLEAELQSDAREFQIKENV) are a coiled coil. NID domains follow at residues 104-193 (GQAL…GEVE) and 202-293 (RSAV…EVEV).

The protein belongs to the NMI family. Interacts with MYCN and MYC, as well as with other transcription factors with a Zip, HLH or a HLH-Zip motif. Interacts with all STAT proteins except STAT2. Interacts with IRF7, the interaction is direct and leads to the inhibition of IRF7-mediated type I IFN production. Interacts (via coiled-coil domain) with TRIM21 (via the SPRY domain); the interaction leads to 'Lys-63'-linked ubiquitination of NMI. Interacts with IFI35; the interaction is direct and is facilitated by TRIM21. Interacts with TLR4; the interaction is direct and leads to NF-kappa-B activation. May be ubiquitinated. Expressed in macrophages.

The protein localises to the cytoplasm. Its subcellular location is the nucleus. It localises to the secreted. Acts as a signaling pathway regulator involved in innate immune system response. In response to interleukin 2/IL2 and interferon IFN-gamma/IFNG, interacts with signal transducer and activator of transcription/STAT which activate the transcription of downstream genes involved in a multitude of signals for development and homeostasis. Enhances the recruitment of CBP/p300 coactivators to STAT1 and STAT5, resulting in increased STAT1- and STAT5-dependent transcription. In response to interferon IFN-alpha, associates in a complex with transcriptional regulator IFI35 to regulate immune response; the complex formation prevents proteasome-mediated degradation of IFI35. In complex with IFI35, negatively regulates nuclear factor NF-kappa-B signaling by inhibiting the nuclear translocation, activation and transcription of NF-kappa-B subunit p65/RELA, resulting in the inhibition of endothelial cell proliferation, migration and re-endothelialization of injured arteries. Negatively regulates virus-triggered type I interferon/IFN production by inducing proteosome-dependent degradation of IRF7, a transcriptional regulator of type I IFN, thereby interfering with cellular antiviral responses. Beside its role as an intracellular signaling pathway regulator, also functions extracellularly as damage-associated molecular patterns (DAMPs) to promote inflammation, when actively released by macrophage to the extracellular space during cell injury or pathogen invasion. Macrophage-secreted NMI activates NF-kappa-B signaling in adjacent macrophages through Toll-like receptor 4/TLR4 binding and activation, thereby inducing NF-kappa-B translocation from the cytoplasm into the nucleus which promotes the release of pro-inflammatory cytokines. This Mus musculus (Mouse) protein is N-myc-interactor.